A 551-amino-acid chain; its full sequence is Formate--tetrahydrofolate ligase (551 aa).

Residue 54–61 (TPPGEGKT) participates in ATP binding.

It belongs to the formate--tetrahydrofolate ligase family.

It carries out the reaction (6S)-5,6,7,8-tetrahydrofolate + formate + ATP = (6R)-10-formyltetrahydrofolate + ADP + phosphate. It participates in one-carbon metabolism; tetrahydrofolate interconversion. This chain is Formate--tetrahydrofolate ligase, found in Myxococcus xanthus (strain DK1622).